The chain runs to 150 residues: D-aminoacyl-tRNA deacylase (150 aa).

Positions 137 to 138 match the Gly-cisPro motif, important for rejection of L-amino acids motif; it reads GP.

It belongs to the DTD family. As to quaternary structure, homodimer.

It is found in the cytoplasm. The enzyme catalyses glycyl-tRNA(Ala) + H2O = tRNA(Ala) + glycine + H(+). It carries out the reaction a D-aminoacyl-tRNA + H2O = a tRNA + a D-alpha-amino acid + H(+). Its function is as follows. An aminoacyl-tRNA editing enzyme that deacylates mischarged D-aminoacyl-tRNAs. Also deacylates mischarged glycyl-tRNA(Ala), protecting cells against glycine mischarging by AlaRS. Acts via tRNA-based rather than protein-based catalysis; rejects L-amino acids rather than detecting D-amino acids in the active site. By recycling D-aminoacyl-tRNA to D-amino acids and free tRNA molecules, this enzyme counteracts the toxicity associated with the formation of D-aminoacyl-tRNA entities in vivo and helps enforce protein L-homochirality. The chain is D-aminoacyl-tRNA deacylase from Alkalilimnicola ehrlichii (strain ATCC BAA-1101 / DSM 17681 / MLHE-1).